The primary structure comprises 431 residues: Evolutionarily conserved signaling intermediate in Toll pathway, mitochondrial (431 aa).

A mitochondrion-targeting transit peptide spans 1–48 (MSWVQATLLARGLCRAWGGTCGAALTGTSISQVPRRLPRGLHCSAAAH). K372 is covalently cross-linked (Glycyl lysine isopeptide (Lys-Gly) (interchain with G-Cter in ubiquitin)). The tract at residues 400–431 (LQTSSAGLEEPPLPEDHQEEDDNLQRQQQGQS) is disordered.

This sequence belongs to the ECSIT family. Interacts with MAP3K1, SMAD4 and TRAF6. Interacts with SMAD1 only after BMP4-treatment. Part of the mitochondrial complex I assembly/MCIA complex that comprises at least the core subunits TMEM126B, NDUFAF1, ECSIT and ACAD9 and complement subunits such as COA1 and TMEM186. Interacts with NDUFAF1. Interacts with ACAD9. Interacts with TRIM59. Interacts with TMEM70 and TMEM242. Interacts (when ubiquitinated) with NF-kappa-B subunits RELA and NFKB1. Interacts with RIGI, IFIT1 and MAVS; these interactions promote RLR-mediated type I IFN induction. Interacts with SQSTM1; this interaction inhibits TLR4 signaling via functional regulation of the TRAF6-ECSIT complex. Interacts with cereblon/CRBN; this interaction inhibits the ubiquitination of ECSIT. In terms of processing, ubiquitinated on Lys-372; leading to translocation in the nucleus together with RELA and NFKB1 and expression of NF-kappa-B-dependent genes.

The protein localises to the cytoplasm. It is found in the nucleus. It localises to the mitochondrion. Its function is as follows. Adapter protein that plays a role in different signaling pathways including TLRs and IL-1 pathways or innate antiviral induction signaling. Plays a role in the activation of NF-kappa-B by forming a signal complex with TRAF6 and TAK1/MAP3K7 to activate TAK1/MAP3K7 leading to activation of IKKs. Once ubiquitinated, interacts with the dissociated RELA and NFKB1 proteins and translocates to the nucleus where it induces NF-kappa-B-dependent gene expression. Plays a role in innate antiviral immune response by bridging the pattern recognition receptors RIGI and MDA5/IFIT1 to the MAVS complex at the mitochondrion. Promotes proteolytic activation of MAP3K1. Involved in the BMP signaling pathway. Required for normal embryonic development. In terms of biological role, as part of the MCIA complex, involved in the assembly of the mitochondrial complex I. This chain is Evolutionarily conserved signaling intermediate in Toll pathway, mitochondrial, found in Homo sapiens (Human).